The primary structure comprises 171 residues: Ribosome maturation factor RimM (171 aa).

The 73-residue stretch at 97 to 169 (DGEFYYHEII…RVDVSIMEGL (73 aa)) folds into the PRC barrel domain.

Belongs to the RimM family. Binds ribosomal protein uS19.

It is found in the cytoplasm. Functionally, an accessory protein needed during the final step in the assembly of 30S ribosomal subunit, possibly for assembly of the head region. Essential for efficient processing of 16S rRNA. May be needed both before and after RbfA during the maturation of 16S rRNA. It has affinity for free ribosomal 30S subunits but not for 70S ribosomes. The chain is Ribosome maturation factor RimM from Lactococcus lactis subsp. lactis (strain IL1403) (Streptococcus lactis).